Reading from the N-terminus, the 237-residue chain is Ribonuclease PH (237 aa).

Residues R86 and 124–126 (GTR) each bind phosphate.

Belongs to the RNase PH family. Homohexameric ring arranged as a trimer of dimers.

It catalyses the reaction tRNA(n+1) + phosphate = tRNA(n) + a ribonucleoside 5'-diphosphate. Its function is as follows. Phosphorolytic 3'-5' exoribonuclease that plays an important role in tRNA 3'-end maturation. Removes nucleotide residues following the 3'-CCA terminus of tRNAs; can also add nucleotides to the ends of RNA molecules by using nucleoside diphosphates as substrates, but this may not be physiologically important. Probably plays a role in initiation of 16S rRNA degradation (leading to ribosome degradation) during starvation. This chain is Ribonuclease PH, found in Idiomarina loihiensis (strain ATCC BAA-735 / DSM 15497 / L2-TR).